Reading from the N-terminus, the 338-residue chain is Heat-inducible transcription repressor HrcA (338 aa).

The protein belongs to the HrcA family.

In terms of biological role, negative regulator of class I heat shock genes (grpE-dnaK-dnaJ and groELS operons). Prevents heat-shock induction of these operons. This Nitrosomonas eutropha (strain DSM 101675 / C91 / Nm57) protein is Heat-inducible transcription repressor HrcA.